A 427-amino-acid chain; its full sequence is Peptidase B (427 aa).

Positions 195 and 200 each coordinate Mn(2+). The active site involves lysine 207. Residues aspartate 218, aspartate 277, and glutamate 279 each contribute to the Mn(2+) site. Arginine 281 is a catalytic residue.

The protein belongs to the peptidase M17 family. As to quaternary structure, homohexamer. Mn(2+) is required as a cofactor.

It localises to the cytoplasm. The enzyme catalyses Release of an N-terminal amino acid, Xaa, from a peptide or arylamide. Xaa is preferably Glu or Asp but may be other amino acids, including Leu, Met, His, Cys and Gln.. In terms of biological role, probably plays an important role in intracellular peptide degradation. This is Peptidase B from Salmonella typhi.